A 1976-amino-acid chain; its full sequence is Myosin-10 (1976 aa).

Arginine 18 bears the Omega-N-methylarginine mark. In terms of domain architecture, Myosin N-terminal SH3-like spans 31–81 (TAKKLVWIPSERHGFEAASIKEERGDEVMVELAENGKKAMVNKDDIQKMNP). One can recognise a Myosin motor domain in the interval 85–783 (SKVEDMAELT…VLAHLEEERD (699 aa)). 178-185 (GESGAGKT) is an ATP binding site. Lysine 442 carries the post-translational modification N6-acetyllysine. An actin-binding region spans residues 661-683 (LTKLMATLRNTNPNFVRCIIPNH). The region spanning 786-815 (ITDIIIFFQAVCRGYLARKAFAKKQQQLSA) is the IQ domain. The stretch at 845-1976 (LQVTRQEEEL…VNDTQPPQSE (1132 aa)) forms a coiled coil. Residues 1125–1175 (EDFESEKASRNKAEKQKRDLSEELEALKTELEDTLDTTAAQQELRTKREQE) form a disordered region. Positions 1129–1155 (SEKASRNKAEKQKRDLSEELEALKTEL) are enriched in basic and acidic residues. Position 1145 is a phosphoserine (serine 1145). N6-acetyllysine occurs at positions 1241, 1301, and 1645. Disordered regions lie at residues 1697 to 1718 (ASSE…DEIA) and 1874 to 1976 (KANA…PQSE). Residues 1698–1708 (SSERARRHAEQ) show a composition bias toward basic and acidic residues. Arginine 1930 is subject to Omega-N-methylarginine. Serine 1935, serine 1937, serine 1938, and serine 1939 each carry phosphoserine. Position 1940 is an omega-N-methylarginine (arginine 1940). 2 positions are modified to phosphoserine: serine 1952 and serine 1956. Threonine 1960 carries the phosphothreonine modification. Polar residues predominate over residues 1967-1976 (VNDTQPPQSE). Serine 1975 is modified (phosphoserine).

The protein belongs to the TRAFAC class myosin-kinesin ATPase superfamily. Myosin family. As to quaternary structure, myosin is a hexameric protein that consists of 2 heavy chain subunits (MHC), 2 alkali light chain subunits (MLC) and 2 regulatory light chain subunits (MLC-2). Interacts with PLEKHG6. Interacts with ECPAS. Interacts with LARP6. Interacts with MCC. Interacts with KIF26B. Interacts with CFAP95. Phosphorylated by ABL2. In terms of tissue distribution, in newborn kidney, expressed in the mesenchyme and ureteric buds.

It is found in the cell projection. It localises to the lamellipodium. Its function is as follows. Involved with LARP6 in the stabilization of type I collagen mRNAs for CO1A1 and CO1A2. During cell spreading, plays an important role in cytoskeleton reorganization, focal contacts formation (in the central part but not the margins of spreading cells), and lamellipodial extension; this function is mechanically antagonized by MYH9. Cellular myosin that appears to play a role in cytokinesis, cell shape, and specialized functions such as secretion and capping. In Mus musculus (Mouse), this protein is Myosin-10 (Myh10).